Consider the following 182-residue polypeptide: Large ribosomal subunit protein uL6 (182 aa).

It belongs to the universal ribosomal protein uL6 family. Part of the 50S ribosomal subunit.

This protein binds to the 23S rRNA, and is important in its secondary structure. It is located near the subunit interface in the base of the L7/L12 stalk, and near the tRNA binding site of the peptidyltransferase center. This Methanococcus maripaludis (strain C5 / ATCC BAA-1333) protein is Large ribosomal subunit protein uL6.